Here is a 1286-residue protein sequence, read N- to C-terminus: MQKGNIRIAIDKGGTFTDCVGNIGTGKQEHDTVIKLLSVDPKNYPDAPLEGIRRLLEVLEHKTIPRGIPLDISNVRSLRMGTTLATNCALERNGERCAFITTKGFKDSLLIGDQTRPDIFNLNIKKVVPLYDTVVEIDERVTLEDFSEDPYFTKSSPNEQEGILEGNSGEMVRVIKKPDESSVRSILKVLYASGIKSIAIAFLHSYTFPDHERIVGNIAREIGFSHVSLSSEVSPMIKFLPRAHSSVADAYLTPVIKKYLNSISAGLSHAEDTHIQFMQSDGGLVDGGKFSGLKSILSGPAGGVIGYSSTCYDKNNNIPLIGFDMGGTSTDVSRYGDGRLEHVFETVTAGIIIQSPQLDIHTVAAGGSSILSWKNGLFRVGPDSAAADPGPAAYRKGGPLTITDANLFLGRLVPEFFPKIFGPNEDESLDLETTTLKFRELTDVINKDLNSNLTMEEVAYGFIKVANECMARPVRAITEAKGHVVSQHRLVSFGGAGGQHAIAVADSLGIDTVLIHRYSSILSAYGIFLADVIEENQEPCSFILGEPETILKVKKRFLELSKNSIKNLLSQSFSREDIVLERYLNLRYEGTETSLMILQKYDDQWNFREWFSEAHKKEFGFSFDDKRIIIDDIRIRAIGKSGVRKEKTVDEQLIEISHFKKADVSKDASFTQKAYFDNKWVDTAVFKIDDLPAGTIIEGPAILADGTQTNIILPNSQATILNSHIFIKINQKAAKTLSKSGYELDIDPILLSIFSHRFMDIALQMGTQLRKTSVSTNVKERLDFSCALFDSKGNLVANAPHVPVHLGSMSTCISAQAKLWEGKLKPGDVLITNHPDIGGTHLPDITVITPSFSSTGELIFYVASRAHHADIGGILPGSVPPNSKELYEEGTAIYSELVVKEGIFQEELIYKLFVEDPGKYPGCSGSRRFSDNISDLKAQVAANTKGIQLIGSLTKEYDLATILKYMAAIQTNASESIKKMLAKMVEHFGTTKFSGEDRLDDGSLIKLQVIIRPEKEEYIFNFDGTSPQVYGNLNAPEAITNSAILYCLRCLVGEDIPLNQGCLKPLTIKIPAGSLLSPRSGAAVVGGNVLTSQRVTDVILKTFNVMADSQGDCNNFTFGTGGNSGNKTDKQIKGFGYYETICGGSGAGADSWRGSGWNGSDAVHTNMTNTRMTDTEVFERRYPVLLKEFSIRRGSGGKGKYTGGNGVVRDVQFRKAVTASILSERRVIGPHGIKGGQDGSRGENLWVRHSTGALINVGGKNTIYAQPGDRFIIKTPGGGGFGQYKD.

Residues serine 930 and serine 1077 each carry the phosphoserine modification.

This sequence belongs to the oxoprolinase family. Homodimer.

It is found in the cytoplasm. It carries out the reaction 5-oxo-L-proline + ATP + 2 H2O = L-glutamate + ADP + phosphate + H(+). In terms of biological role, catalyzes the cleavage of 5-oxo-L-proline to form L-glutamate coupled to the hydrolysis of ATP to ADP and inorganic phosphate. This Saccharomyces cerevisiae (strain ATCC 204508 / S288c) (Baker's yeast) protein is 5-oxoprolinase (OXP1).